Reading from the N-terminus, the 462-residue chain is Cleavage and polyadenylation specificity factor subunit 7 (462 aa).

Disordered stretches follow at residues 34–68 and 161–213; these read VLTA…NKTP and TRQN…PSVL. Over residues 50–62 the composition is skewed to pro residues; that stretch reads EPPPPVRQEPAPK. The RRM domain maps to 82-162; sequence AAVYVGSFSW…EKVDVRPATR (81 aa). Positions 181 to 190 are enriched in basic and acidic residues; sequence HSRDSSDSAD. Thr194 is modified (phosphothreonine). Ser196 is subject to Phosphoserine. Lys345 is covalently cross-linked (Glycyl lysine isopeptide (Lys-Gly) (interchain with G-Cter in SUMO2)). The disordered stretch occupies residues 400–462; that stretch reads SVGASGSSSR…HRDRERDRHH (63 aa). Residues Ser404 and Ser414 each carry the phosphoserine modification. The arg/Ser-rich domain stretch occupies residues 409-460; that stretch reads RKRHRSRERSPSRSRESSRRHRDLLHNEDRHDDYFQERNREHERHRDRERDR. Basic and acidic residues-rich tracts occupy residues 416 to 425 and 432 to 462; these read ERSPSRSRES and LLHN…DRHH.

The protein belongs to the RRM CPSF6/7 family. As to quaternary structure, component of the cleavage factor Im (CFIm) complex which is a heterotetramer composed of two subunits of NUDT21/CPSF5 and two subunits of CPSF6 or CPSF7 or a heterodimer of CPSF6 and CPSF7. The cleavage factor Im (CFIm) complex associates with the CPSF and CSTF complexes to promote the assembly of the core mRNA 3'-processing machinery. Interacts with NUDT21/CPSF5. Interacts (via Arg/Ser-rich domain) with FIP1L1 (preferentially via unphosphorylated form and Arg/Glu/Asp-rich region); this interaction mediates, at least in part, the interaction between the CFIm and CPSF complexes and may be inhibited by CPSF7 hyper-phosphorylation. Phosphorylated. Post-translationally, asymmetrically dimethylated on arginine residues by PRMT1.

It localises to the nucleus. Its subcellular location is the cytoplasm. Component of the cleavage factor Im (CFIm) complex that functions as an activator of the pre-mRNA 3'-end cleavage and polyadenylation processing required for the maturation of pre-mRNA into functional mRNAs. CFIm contributes to the recruitment of multiprotein complexes on specific sequences on the pre-mRNA 3'-end, so called cleavage and polyadenylation signals (pA signals). Most pre-mRNAs contain multiple pA signals, resulting in alternative cleavage and polyadenylation (APA) producing mRNAs with variable 3'-end formation. The CFIm complex acts as a key regulator of cleavage and polyadenylation site choice during APA through its binding to 5'-UGUA-3' elements localized in the 3'-untranslated region (UTR) for a huge number of pre-mRNAs. CPSF7 activates directly the mRNA 3'-processing machinery. Binds to pA signals in RNA substrates. The protein is Cleavage and polyadenylation specificity factor subunit 7 of Rattus norvegicus (Rat).